The primary structure comprises 475 residues: Zinc finger protein 296 (475 aa).

Positions 1-78 (MSRRKAGSAP…SPGPMPAGAA (78 aa)) are disordered. Lys-35 participates in a covalent cross-link: Glycyl lysine isopeptide (Lys-Gly) (interchain with G-Cter in SUMO2). 3 consecutive C2H2-type zinc fingers follow at residues 157 to 180 (LSCL…QWDH), 231 to 253 (PTCP…MRSH), and 259 to 281 (YACD…KKTH). A disordered region spans residues 275 to 385 (NRHKKTHRQV…KSGGKSRGPG (111 aa)). Composition is skewed to low complexity over residues 295 to 313 (SQEQ…AAAP) and 326 to 338 (GAAA…EPGA). Residues 339-351 (PGSGAQAGPGGDT) are compositionally biased toward gly residues. Polar residues predominate over residues 354-367 (AITTEQRTDPANSQ). C2H2-type zinc fingers lie at residues 386–408 (GSCE…RRSH), 414–436 (YTCE…RRMH), and 445–468 (FECP…RQKH).

This sequence belongs to the krueppel C2H2-type zinc-finger protein family. Interacts with KLF4.

The protein localises to the nucleus. Its function is as follows. May be a transcriptional corepressor with KLF4. The chain is Zinc finger protein 296 (ZNF296) from Homo sapiens (Human).